The primary structure comprises 192 residues: Flavin prenyltransferase UbiX (192 aa).

FMN contacts are provided by residues 10–12 (GAS), Ser-36, 92–95 (SMTT), and Arg-127. Dimethylallyl phosphate contacts are provided by Tyr-157 and Lys-173.

Belongs to the UbiX/PAD1 family.

The catalysed reaction is dimethylallyl phosphate + FMNH2 = prenylated FMNH2 + phosphate. Functionally, flavin prenyltransferase that catalyzes the synthesis of the prenylated FMN cofactor (prenyl-FMN) for 4-hydroxy-3-polyprenylbenzoic acid decarboxylase UbiD. The prenyltransferase is metal-independent and links a dimethylallyl moiety from dimethylallyl monophosphate (DMAP) to the flavin N5 and C6 atoms of FMN. The sequence is that of Flavin prenyltransferase UbiX from Chlamydia pneumoniae (Chlamydophila pneumoniae).